The primary structure comprises 704 residues: MSLAQDINRVVAPFEVISEFKPAGDQPAAIADLTERINNGEKDVVLLGATGTGKSATTAWLIEQVQRPTLVMVQNKTLAAQLANEFRELLPNNAVEYFVSYYDYYQPEAYVAQTDTFIEKDSSINEEVERLRHSATNALLTRRDVVVVATVSCIYGLGTPEEYIAGMVTLRKGAEMNRDDLLRKFVSMQYARNDMDFHRGTFRVRGDTVEIIPMYEELAIRIEFFGDEIENIQTLHPLTGQIIQDEEEMYVFPASHYVAGPERMSRAIKRIEDELAERLQVLESQNKLVEAQRLRMRTTYDLEMMQQMGFCNGIENYSSHIDGRARGTAPHCLLDYFPDDFLLVIDESHVTVPQIGAMYEGDMSRKRNLVDFGFRLPSAMDNRPLKWDEFLERVGQTVYLSATPGKYELGKADGFVQQIIRPTGLIDPEVVVKPTKGQIDDLLGEIRTRTERNERVLVTTLTKRMAEDLTDYLLGHGVKVEYLHSDVDTLRRVELLRELRMGTFDVLVGINLLREGLDLPEVSLVSILDADKEGFLRSSTSLIQTIGRAARNVSGQVHMYADRITDSMAQAIDETNRRRAIQVAYNTEHGIDPQPLRKKIADITDQLAKEDADTDALLGSFDYGKGKRGITGANKPGAKKAAAQVRADGLAAAPAEDLVGMIAQLTEQMHGAAAELQFEVAARIRDEVSELKKELRQMQAAGHA.

The Helicase ATP-binding domain maps to 35-188; that stretch reads ERINNGEKDV…DDLLRKFVSM (154 aa). An ATP-binding site is contributed by 48-55; the sequence is GATGTGKS. The Beta-hairpin motif lies at 101–124; the sequence is YYDYYQPEAYVAQTDTFIEKDSSI. The region spanning 438 to 604 is the Helicase C-terminal domain; sequence QIDDLLGEIR…PLRKKIADIT (167 aa). The 36-residue stretch at 659 to 694 folds into the UVR domain; sequence VGMIAQLTEQMHGAAAELQFEVAARIRDEVSELKKE.

Belongs to the UvrB family. As to quaternary structure, forms a heterotetramer with UvrA during the search for lesions. Interacts with UvrC in an incision complex.

The protein resides in the cytoplasm. The UvrABC repair system catalyzes the recognition and processing of DNA lesions. A damage recognition complex composed of 2 UvrA and 2 UvrB subunits scans DNA for abnormalities. Upon binding of the UvrA(2)B(2) complex to a putative damaged site, the DNA wraps around one UvrB monomer. DNA wrap is dependent on ATP binding by UvrB and probably causes local melting of the DNA helix, facilitating insertion of UvrB beta-hairpin between the DNA strands. Then UvrB probes one DNA strand for the presence of a lesion. If a lesion is found the UvrA subunits dissociate and the UvrB-DNA preincision complex is formed. This complex is subsequently bound by UvrC and the second UvrB is released. If no lesion is found, the DNA wraps around the other UvrB subunit that will check the other stand for damage. The protein is UvrABC system protein B of Pseudarthrobacter chlorophenolicus (strain ATCC 700700 / DSM 12829 / CIP 107037 / JCM 12360 / KCTC 9906 / NCIMB 13794 / A6) (Arthrobacter chlorophenolicus).